A 468-amino-acid polypeptide reads, in one-letter code: Cysteine--tRNA ligase (468 aa).

Zn(2+) is bound at residue Cys28. Residues 30–40 carry the 'HIGH' region motif; sequence PTVYNYIHIGN. Zn(2+) contacts are provided by Cys212, His237, and Glu241. Positions 271 to 275 match the 'KMSKS' region motif; sequence KMSKS. Lys274 serves as a coordination point for ATP.

This sequence belongs to the class-I aminoacyl-tRNA synthetase family. In terms of assembly, monomer. The cofactor is Zn(2+).

Its subcellular location is the cytoplasm. It carries out the reaction tRNA(Cys) + L-cysteine + ATP = L-cysteinyl-tRNA(Cys) + AMP + diphosphate. This Latilactobacillus sakei subsp. sakei (strain 23K) (Lactobacillus sakei subsp. sakei) protein is Cysteine--tRNA ligase.